We begin with the raw amino-acid sequence, 219 residues long: Proteasome subunit beta type-9 (219 aa).

Positions 1–20 (MLRAGAPTAGSFRTEEVHTG) are cleaved as a propeptide — removed in mature form. Residue threonine 21 is the Nucleophile of the active site. 2 positions are modified to N6-acetyllysine: lysine 53 and lysine 109.

This sequence belongs to the peptidase T1B family. The 26S proteasome consists of a 20S proteasome core and two 19S regulatory subunits. The 20S proteasome core is composed of 28 subunits that are arranged in four stacked rings, resulting in a barrel-shaped structure. The two end rings are each formed by seven alpha subunits, and the two central rings are each formed by seven beta subunits. The catalytic chamber with the active sites is on the inside of the barrel. Component of the immunoproteasome, where it displaces the equivalent housekeeping subunit PSMB6. Component of the spermatoproteasome, a form of the proteasome specifically found in testis. Post-translationally, autocleaved. The resulting N-terminal Thr residue of the mature subunit is responsible for the nucleophile proteolytic activity.

The protein resides in the cytoplasm. It is found in the nucleus. It catalyses the reaction Cleavage of peptide bonds with very broad specificity.. In terms of biological role, the proteasome is a multicatalytic proteinase complex which is characterized by its ability to cleave peptides with Arg, Phe, Tyr, Leu, and Glu adjacent to the leaving group at neutral or slightly basic pH. The proteasome has an ATP-dependent proteolytic activity. This subunit is involved in antigen processing to generate class I binding peptides. The chain is Proteasome subunit beta type-9 (Psmb9) from Mus terricolor (Earth-colored mouse).